A 453-amino-acid chain; its full sequence is MAQWDDFPDQQEDTDSCTESVKFDARSVTALLPPHPKNGPTLQERMKSYKTALITLYLIVFVVLVPIIGIVAAQLLKWETKNCTVGSVNADISPSPEGKGNGSEDEMRFREAVMERMSNMESRIQYLSDNEANLLDAKNFQNFSITTDQRFNDVLFQLNSLLSSIQEHENIIGDISKSLVGLNTTVLDLQFSIETLNGRVQENAFKQQEEMRKLEERIYNASAEIKSLDEKQVYLEQEIKGEMKLLNNITNDLRLKDWEHSQTLKNITLLQGPPGPPGEKGDRGPPGQNGIPGFPGLIGTPGLKGDRGISGLPGVRGFPGPMGKTGKPGLNGQKGQKGEKGSGSMQRQSNTVRLVGGSGPHEGRVEIFHEGQWGTVCDDRWELRGGLVVCRSLGYKGVQSVHKRAYFGKGTGPIWLNEVFCFGKESSIEECRIRQWGVRACSHDEDAGVTCTT.

Topologically, residues 1–50 (MAQWDDFPDQQEDTDSCTESVKFDARSVTALLPPHPKNGPTLQERMKSYK) are cytoplasmic. Position 27 is a phosphoserine (Ser-27). Residues 51–76 (TALITLYLIVFVVLVPIIGIVAAQLL) traverse the membrane as a helical; Signal-anchor for type II membrane protein segment. The interval 77 to 108 (KWETKNCTVGSVNADISPSPEGKGNGSEDEMR) is spacer. Residues 77–453 (KWETKNCTVG…DEDAGVTCTT (377 aa)) are Extracellular-facing. Asn-82, Asn-101, Asn-142, Asn-183, Asn-220, Asn-248, and Asn-266 each carry an N-linked (GlcNAc...) asparagine glycan. Residues 194-255 (ETLNGRVQEN…LNNITNDLRL (62 aa)) are a coiled coil. 2 disordered regions span residues 267 to 295 (ITLLQGPPGPPGEKGDRGPPGQNGIPGFP) and 313 to 349 (PGVRGFPGPMGKTGKPGLNGQKGQKGEKGSGSMQRQS). Positions 272 to 343 (GPPGPPGEKG…KGQKGEKGSG (72 aa)) constitute a Collagen-like domain. The 101-residue stretch at 352–452 (VRLVGGSGPH…HDEDAGVTCT (101 aa)) folds into the SRCR domain. 3 disulfide bridges follow: Cys-377/Cys-441, Cys-390/Cys-451, and Cys-421/Cys-431.

As to quaternary structure, homotrimer. Interacts with MYO18A.

Its subcellular location is the membrane. In terms of biological role, membrane glycoproteins implicated in the pathologic deposition of cholesterol in arterial walls during atherogenesis. Two types of receptor subunits exist. These receptors mediate the endocytosis of a diverse group of macromolecules, including modified low density lipoproteins (LDL). The protein is Macrophage scavenger receptor types I and II (MSR1) of Bos taurus (Bovine).